Reading from the N-terminus, the 449-residue chain is Adenylosuccinate synthetase isozyme 1 B (449 aa).

GTP is bound by residues 34–40 (GDEGKGK) and 62–64 (GHT). Aspartate 35 functions as the Proton acceptor in the catalytic mechanism. The Mg(2+) site is built by aspartate 35 and glycine 62. Substrate is bound at residue aspartate 35. IMP is bound by residues 35–38 (DEGK), 60–63 (NAGH), threonine 155, arginine 169, asparagine 248, threonine 263, and arginine 327. The Proton donor role is filled by histidine 63. 323–329 (VTTGRKR) contacts substrate. Residues arginine 329, 355-357 (KLD), and 437-440 (GVGK) contribute to the GTP site.

This sequence belongs to the adenylosuccinate synthetase family. As to quaternary structure, homodimer. Mg(2+) serves as cofactor.

Its subcellular location is the cytoplasm. It carries out the reaction IMP + L-aspartate + GTP = N(6)-(1,2-dicarboxyethyl)-AMP + GDP + phosphate + 2 H(+). The protein operates within purine metabolism; AMP biosynthesis via de novo pathway; AMP from IMP: step 1/2. In terms of biological role, component of the purine nucleotide cycle (PNC), which interconverts IMP and AMP to regulate the nucleotide levels in various tissues, and which contributes to glycolysis and ammoniagenesis. Catalyzes the first committed step in the biosynthesis of AMP from IMP. In Salmo salar (Atlantic salmon), this protein is Adenylosuccinate synthetase isozyme 1 B (adss1b).